The following is a 120-amino-acid chain: Aspartate 1-decarboxylase (120 aa).

S25 serves as the catalytic Schiff-base intermediate with substrate; via pyruvic acid. Position 25 is a pyruvic acid (Ser) (S25). T57 contacts substrate. The active-site Proton donor is Y58. Residue 73–75 (GAA) participates in substrate binding.

It belongs to the PanD family. Heterooctamer of four alpha and four beta subunits. It depends on pyruvate as a cofactor. In terms of processing, is synthesized initially as an inactive proenzyme, which is activated by self-cleavage at a specific serine bond to produce a beta-subunit with a hydroxyl group at its C-terminus and an alpha-subunit with a pyruvoyl group at its N-terminus.

Its subcellular location is the cytoplasm. The catalysed reaction is L-aspartate + H(+) = beta-alanine + CO2. Its pathway is cofactor biosynthesis; (R)-pantothenate biosynthesis; beta-alanine from L-aspartate: step 1/1. Catalyzes the pyruvoyl-dependent decarboxylation of aspartate to produce beta-alanine. This Ralstonia pickettii (strain 12J) protein is Aspartate 1-decarboxylase.